Here is a 103-residue protein sequence, read N- to C-terminus: Large ribosomal subunit protein bL21 (103 aa).

This sequence belongs to the bacterial ribosomal protein bL21 family. As to quaternary structure, part of the 50S ribosomal subunit. Contacts protein L20.

In terms of biological role, this protein binds to 23S rRNA in the presence of protein L20. The chain is Large ribosomal subunit protein bL21 from Thioalkalivibrio sulfidiphilus (strain HL-EbGR7).